Here is a 129-residue protein sequence, read N- to C-terminus: Glyoxalase domain-containing protein 5 homolog (129 aa).

Residues 5–128 form the VOC domain; that stretch reads RLDHLVLTVS…DYNLIEISNY (124 aa).

It belongs to the glyoxalase I family.

The polypeptide is Glyoxalase domain-containing protein 5 homolog (glod5) (Dictyostelium discoideum (Social amoeba)).